The primary structure comprises 165 residues: Adenine phosphoribosyltransferase (165 aa).

This sequence belongs to the purine/pyrimidine phosphoribosyltransferase family. Homodimer.

It localises to the cytoplasm. It catalyses the reaction AMP + diphosphate = 5-phospho-alpha-D-ribose 1-diphosphate + adenine. The protein operates within purine metabolism; AMP biosynthesis via salvage pathway; AMP from adenine: step 1/1. Catalyzes a salvage reaction resulting in the formation of AMP, that is energically less costly than de novo synthesis. This is Adenine phosphoribosyltransferase from Bdellovibrio bacteriovorus (strain ATCC 15356 / DSM 50701 / NCIMB 9529 / HD100).